Here is a 104-residue protein sequence, read N- to C-terminus: uncharacterized protein (104 aa).

This is an uncharacterized protein from Escherichia coli (Bacteriophage T4).